Consider the following 509-residue polypeptide: Maturase K (509 aa).

This sequence belongs to the intron maturase 2 family. MatK subfamily.

The protein resides in the plastid. The protein localises to the chloroplast. Usually encoded in the trnK tRNA gene intron. Probably assists in splicing its own and other chloroplast group II introns. The polypeptide is Maturase K (Opuntia quimilo (Cactus)).